The sequence spans 569 residues: Phosphoglucomutase 2 (569 aa).

Positions 1–23 (MSFQIETVPTKPYEDQKPGTSGL) are disordered. An N-acetylserine modification is found at S2. Position 24 (R24) interacts with alpha-D-glucose 1,6-bisphosphate. Residues T111 and T117 each carry the phosphothreonine modification. Alpha-D-glucose 1,6-bisphosphate is bound at residue S119. S119 serves as the catalytic Phosphoserine intermediate. The Mg(2+) site is built by S119, D290, D292, and D294. Position 119 is a phosphoserine (S119). Positions 294, 295, 359, 378, 380, and 391 each coordinate alpha-D-glucose 1,6-bisphosphate.

The protein belongs to the phosphohexose mutase family. Monomer. Mg(2+) is required as a cofactor. The cofactor is Zn(2+). In terms of processing, O-glycosylated with mannose residues. Substrate of UDP-glucose--glycoprotein glucose phosphotransferase, linking glucose in a phosphodiester linkage to O-linked mannose.

It is found in the cytoplasm. The catalysed reaction is alpha-D-glucose 1-phosphate = alpha-D-glucose 6-phosphate. It carries out the reaction O-phospho-L-seryl-[protein] + alpha-D-glucose 1-phosphate = alpha-D-glucose 1,6-bisphosphate + L-seryl-[protein]. It catalyses the reaction alpha-D-glucose 1,6-bisphosphate + L-seryl-[protein] = O-phospho-L-seryl-[protein] + alpha-D-glucose 6-phosphate. In terms of biological role, major phosphoglucomutase isozyme that catalyzes the reversible isomerization of alpha-D-glucose 1-phosphate to alpha-D-glucose 6-phosphate. The mechanism proceeds via the intermediate compound alpha-D-glucose 1,6-bisphosphate. Constitutes about 80-90% of the phosphoglucomutase activity in the cell. Key enzyme in hexose metabolism. The forward reaction is an essential step in the energy metabolism of galactose since the product of the galactose pathway enzymes in yeast is glucose 1-phosphate. The reverse reaction is an essential step for biosynthesis when carbon sources other than galactose are the energy source because glucose 1-phosphate is the starting point for the synthesis of UDP-glucose, which acts as a precursor for the synthesis of oligosaccharides and trehalose. The polypeptide is Phosphoglucomutase 2 (Saccharomyces cerevisiae (strain ATCC 204508 / S288c) (Baker's yeast)).